The following is a 48-amino-acid chain: DNA gyrase inhibitor YacG (48 aa).

Residues cysteine 9, cysteine 12, cysteine 28, and cysteine 32 each contribute to the Zn(2+) site.

This sequence belongs to the DNA gyrase inhibitor YacG family. In terms of assembly, interacts with GyrB. The cofactor is Zn(2+).

Its function is as follows. Inhibits all the catalytic activities of DNA gyrase by preventing its interaction with DNA. Acts by binding directly to the C-terminal domain of GyrB, which probably disrupts DNA binding by the gyrase. The polypeptide is DNA gyrase inhibitor YacG (Wigglesworthia glossinidia brevipalpis).